Reading from the N-terminus, the 637-residue chain is MRFDDPMDEFKRNRKMEEDSKKVIDVKVAESDKGFAKFGKAEVPFHIPTLTKPQEEYKILVDNANNPFEHVLLEKSEDGLRFIHPLEELSVMDFVDRNLSEMRPVKPLPLEETPFKLVEEVKDLEDLAAALQSVEEFAVDLEHNQYRTFQGLTCLMQISTRTEDYIVDIFKLWDHIGPYLRELFKDPKKKKVIHGADRDIIWLQRDFGIYVCNLFDTGQASRVLKLERNSLEFLLKHYCGVAANKEYQKADWRIRPLPDVMKRYAREDTHYLLYIYDVMRMELHTMAKEDEQSDSPLVEVYKRSYDVCMQLYEKELWTRDSYLHVYGVQTGNLNAVQLSIVAGLCEWRDRIARADDESTGYVLPNKTLFDIAKEMPIVVAQLRRLLKSKLPYLERNFDAVISVIRRSMQNAAAFEPVVQSLKDRRPETVVEMNIEPKIEKTDTGASASSLSLEKVCVDDSKKQSSGFGVLPLKRKLESDKTVVEKNIEPKIEKTGTEASASSLSSKKVCVDDSKKQSSGFGVLLSKRKFESDNKVKEEVKVSKSKPDKVIIVVDDDDDDDDDESYEQSTKAADALDRVSETPSKGSPSLTQKPKTCNTEVIVLDDDDDSESREDEDMRRRSEKHRRFMNMKRGFLNI.

The 3'-5' exonuclease domain maps to 118-283; sequence VEEVKDLEDL…YIYDVMRMEL (166 aa). Positions 334-414 constitute an HRDC domain; sequence NAVQLSIVAG…RRSMQNAAAF (81 aa). The span at 553–565 shows a compositional bias: acidic residues; the sequence is VDDDDDDDDDESY. Residues 553–624 form a disordered region; sequence VDDDDDDDDD…EDMRRRSEKH (72 aa). Positions 580-598 are enriched in polar residues; it reads ETPSKGSPSLTQKPKTCNT. Positions 602–614 are enriched in acidic residues; that stretch reads VLDDDDDSESRED.

Its subcellular location is the nucleus. It localises to the nucleoplasm. Its function is as follows. Acts as an important epigenetic regulator through multiple silencing mechanisms. Involved in transcriptional gene silencing (TGS). Plays a role for DNA methylation in the RNA-directed DNA methylation (RdDM) pathway. Contributes to the methylation status of the retrotransposon SN1. Required for DNA methylation only at a subset of RdDM target loci. Plays a regulatory role in RdDM through retention of non-coding RNAs (ncRNAs) in normal cells. Helps to retain Pol V-transcribed RNAs in chromatin to enable their scaffold function and is required for genome-wide Pol IV-dependent siRNA (24 nt siRNA) production that may involve retention of Pol IV transcripts. Involved in association with RRP6L2 in the silencing of the solo LTR locus. Controls levels of ncRNAs from the solo LTR locus. Seems to function independently of the RdDM pathway. Functions redundantly with RRP6L2 in the regulation of FLC locus. Participates in the maintenance of trimethylated 'Lys-27' (H3K27me3) at FLC locus via the regulation of antisense long non-coding RNAs (lncRNAs) and the regulation of diverse antisense RNAs derived from the FLC locus. Seems not involved in the exosomal RNA degradation. Can complement the growth defect of a yeast mutant lacking RRP6 exonuclease. This is Protein RRP6-like 1 from Arabidopsis thaliana (Mouse-ear cress).